Consider the following 130-residue polypeptide: Small ribosomal subunit protein uS8 (130 aa).

It belongs to the universal ribosomal protein uS8 family. Part of the 30S ribosomal subunit.

Its function is as follows. One of the primary rRNA binding proteins, it binds directly to 16S rRNA central domain where it helps coordinate assembly of the platform of the 30S subunit. The sequence is that of Small ribosomal subunit protein uS8 from Methanococcus vannielii (strain ATCC 35089 / DSM 1224 / JCM 13029 / OCM 148 / SB).